The following is a 524-amino-acid chain: Sterol O-acyltransferase 2 (524 aa).

Residues 1-31 form a disordered region; that stretch reads MEPKAPQLRRRERQGEEQENGACGEGNTRTH. Residues 1–118 lie on the Cytoplasmic side of the membrane; that stretch reads MEPKAPQLRR…LDELMGVQHF (118 aa). A cholesterol-binding site is contributed by histidine 117. A helical membrane pass occupies residues 119-140; that stretch reads RTIYHMFIAGLCVLIISTLAID. Residues 141–160 lie on the Lumenal side of the membrane; the sequence is FIDEGRLMLEFDLLLFSFGQ. Residues 161 to 186 traverse the membrane as a helical segment; sequence LPLALMMWVPMFLSTLLLPYQTLRLW. Residues 187 to 198 are Cytoplasmic-facing; that stretch reads ARPRSGGAWTLG. Residues 199–222 form a helical membrane-spanning segment; it reads ASLGCVLLAAHAAVLCVLPVHVSV. The Lumenal segment spans residues 223–230; that stretch reads KHELPPAS. A helical transmembrane segment spans residues 231–254; that stretch reads RCVLVFEQVRFLMKSYSFLRETVP. The Cytoplasmic portion of the chain corresponds to 255 to 295; that stretch reads GIFCVRGGKGICTPSFSSYLYFLFCPTLIYRETYPRTPSIR. Cysteine 279 is modified (cysteine sulfenic acid (-SOH); alternate). A Glycyl cysteine thioester (Cys-Gly) (interchain with G-Cter in ubiquitin); alternate cross-link involves residue cysteine 279. The chain crosses the membrane as a helical span at residues 296–328; the sequence is WNYVAKNFAQALGCLLYACFILGRLCVPVFANM. The Lumenal portion of the chain corresponds to 329-345; the sequence is SREPFSTRALLLSILHA. A helical transmembrane segment spans residues 346-371; it reads TGPGIFMLLLIFFAFLHCWLNAFAEM. Over 372–419 the chain is Cytoplasmic; the sequence is LRFGDRMFYRDWWNSTSFSNYYRTWNVVVHDWLYSYVYQDGLWLLGRQ. Residues 379–385 carry the FYXDWWN motif motif; sequence FYRDWWN. 6 residues coordinate an acyl-CoA: asparagine 391, arginine 394, asparagine 397, histidine 401, tyrosine 409, and serine 432. A helical transmembrane segment spans residues 420 to 444; that stretch reads GRGAAMLGVFLVSALVHEYIFCFVL. Histidine 436 is an active-site residue. Residues 445–450 are Lumenal-facing; the sequence is GFFYPV. The helical transmembrane segment at 451–466 threads the bilayer; the sequence is MLILFLVVGGLLNFTM. Residues 467–472 lie on the Cytoplasmic side of the membrane; that stretch reads NDRHTG. Residues 473–504 traverse the membrane as a helical segment; the sequence is PAWNILMWTFLFLGQGIQVSLYCQEWYARRHC. Residues 505-524 lie on the Lumenal side of the membrane; sequence PLPQPTFWELVTPRSWSCHP.

This sequence belongs to the membrane-bound acyltransferase family. Sterol o-acyltransferase subfamily. In terms of assembly, may form homo- or heterodimers. Interacts with INSIG1; the interaction is direct and promotes association with AMFR/gp78. Post-translationally, polyubiquitinated by AMFR/gp78 at Cys-279, leading to its degradation when the lipid levels are low. Association with AMFR/gp78 is mediated via interaction with INSIG1. High concentration of cholesterol and fatty acid results in Cys-279 oxidation, preventing ubiquitination at the same site, resulting in protein stabilization. In terms of processing, oxidized at Cys-279: high concentration of cholesterol and fatty acid induce reactive oxygen species, which oxidizes Cys-279, preventing ubiquitination at the same site, and resulting in protein stabilization.

Its subcellular location is the endoplasmic reticulum membrane. It carries out the reaction a sterol + a long-chain fatty acyl-CoA = a long-chain 3-hydroxysterol ester + CoA. It catalyses the reaction cholesterol + an acyl-CoA = a cholesterol ester + CoA. The catalysed reaction is cholesterol + (9Z)-octadecenoyl-CoA = cholesteryl (9Z-octadecenoate) + CoA. The enzyme catalyses (5Z,8Z,11Z,14Z,17Z)-eicosapentaenoyl-CoA + cholesterol = (5Z,8Z,11Z,14Z,17Z-eicosapentaenoyl)-cholesterol + CoA. It carries out the reaction (9Z,12Z,15Z)-octadecatrienoyl-CoA + cholesterol = (9Z,12Z,15Z-octadecatrienoyl)-cholesterol + CoA. It catalyses the reaction (5Z,8Z,11Z,14Z)-eicosatetraenoyl-CoA + cholesterol = cholesteryl (5Z,8Z,11Z,14Z)-eicosatetraenoate + CoA. Catalyzes the formation of fatty acid-cholesterol esters, which are less soluble in membranes than cholesterol. Plays a role in lipoprotein assembly and dietary cholesterol absorption. Utilizes oleoyl-CoA ((9Z)-octadecenoyl-CoA) and linolenoyl-CoA ((9Z,12Z,15Z)-octadecatrienoyl-CoA) as substrates. May provide cholesteryl esters for lipoprotein secretion from hepatocytes and intestinal mucosa. The protein is Sterol O-acyltransferase 2 of Rattus norvegicus (Rat).